A 100-amino-acid chain; its full sequence is Ubiquitin-related modifier 1 homolog (100 aa).

Residue glycine 100 is modified to 1-thioglycine. Glycine 100 is covalently cross-linked (Glycyl lysine isopeptide (Gly-Lys) (interchain with K-? in acceptor proteins)).

This sequence belongs to the URM1 family. In terms of assembly, interacts with cer. C-terminal thiocarboxylation occurs in 2 steps, it is first acyl-adenylated (-COAMP) via the hesA/moeB/thiF part of the MOCS3 homolog, then thiocarboxylated (-COSH) via the rhodanese domain of the MOCS3 homolog.

It is found in the cytoplasm. It participates in tRNA modification; 5-methoxycarbonylmethyl-2-thiouridine-tRNA biosynthesis. Acts as a sulfur carrier required for 2-thiolation of mcm(5)S(2)U at tRNA wobble positions of cytosolic tRNA(Lys), tRNA(Glu) and tRNA(Gln). Serves as sulfur donor in tRNA 2-thiolation reaction by being thiocarboxylated (-COSH) at its C-terminus by MOCS3. The sulfur is then transferred to tRNA to form 2-thiolation of mcm(5)S(2)U. Also acts as a ubiquitin-like protein (UBL) that is covalently conjugated via an isopeptide bond to lysine residues of target proteins such as Prx2/Jafrac1, Ciao1, Eip71CD and GILT1. The thiocarboxylated form serves as substrate for conjugation and oxidative stress specifically induces the formation of UBL-protein conjugates. In Drosophila willistoni (Fruit fly), this protein is Ubiquitin-related modifier 1 homolog.